The sequence spans 82 residues: Sulfur carrier protein TusA (82 aa).

The Cysteine persulfide intermediate role is filled by C20.

The protein belongs to the sulfur carrier protein TusA family.

It localises to the cytoplasm. In terms of biological role, sulfur carrier protein which probably makes part of a sulfur-relay system. This is Sulfur carrier protein TusA from Aeromonas hydrophila subsp. hydrophila (strain ATCC 7966 / DSM 30187 / BCRC 13018 / CCUG 14551 / JCM 1027 / KCTC 2358 / NCIMB 9240 / NCTC 8049).